The sequence spans 511 residues: Fas-activated serine/threonine kinase (511 aa).

One can recognise an RAP domain in the interval 439 to 497 (VVLMLRERWHFCRDGRVLLGSRALRERHLGLMGYQLLPLPFEELESQRGLPQLKSYLRQ).

Belongs to the FAST protein kinase family. As to quaternary structure, interacts with TIA1; the interactions leads to TIA1 phosphorylation. Interacts with TIAR. In terms of processing, autophosphorylated on serine/threonine residues. Activated by dephosphorylation.

The protein resides in the mitochondrion matrix. The enzyme catalyses L-seryl-[Fas-activated protein] + ATP = O-phospho-L-seryl-[Fas-activated protein] + ADP + H(+). It carries out the reaction L-threonyl-[Fas-activated protein] + ATP = O-phospho-L-threonyl-[Fas-activated protein] + ADP + H(+). It catalyses the reaction L-seryl-[protein] + ATP = O-phospho-L-seryl-[protein] + ADP + H(+). The catalysed reaction is L-threonyl-[protein] + ATP = O-phospho-L-threonyl-[protein] + ADP + H(+). Functionally, phosphorylates the splicing regulator TIA1, thereby promoting the inclusion of FAS exon 6, which leads to an mRNA encoding a pro-apoptotic form of the receptor. Required for the biogenesis of some mitochondrial-encoded mRNAs, specifically stabilizes ND6 (NADH dehydrogenase complex subunit 6) mRNA, and regulates its levels. This Mus musculus (Mouse) protein is Fas-activated serine/threonine kinase (Fastk).